Reading from the N-terminus, the 377-residue chain is NIF3-like protein 1 (377 aa).

At Lys-109 the chain carries N6-acetyllysine. The tract at residues 244-377 (LLLHTGMGRL…ETDRDPLQVV (134 aa)) is mediates interaction with COPS2. Thr-255 bears the Phosphothreonine mark. Ser-259 carries the phosphoserine modification.

Belongs to the GTP cyclohydrolase I type 2/NIF3 family. In terms of assembly, homodimer. Interacts with COPS2. Interacts with THOC7.

It localises to the cytoplasm. Its subcellular location is the nucleus. Its function is as follows. May function as a transcriptional corepressor through its interaction with COPS2, negatively regulating the expression of genes involved in neuronal differentiation. The chain is NIF3-like protein 1 from Homo sapiens (Human).